The primary structure comprises 167 residues: Lipoprotein signal peptidase (167 aa).

3 consecutive transmembrane segments (helical) span residues 8–28 (FFLLGLILTVGIDQTVKYWIM), 61–81 (FSHWGLIALTLIILIFLLWLW), and 93–113 (FGLTLIIGGAIGNLIDRICFY). Catalysis depends on residues aspartate 117 and aspartate 136. A helical membrane pass occupies residues 126 to 146 (IFYFAVFNLADTFITLGVIAI).

This sequence belongs to the peptidase A8 family.

The protein localises to the cell inner membrane. It catalyses the reaction Release of signal peptides from bacterial membrane prolipoproteins. Hydrolyzes -Xaa-Yaa-Zaa-|-(S,diacylglyceryl)Cys-, in which Xaa is hydrophobic (preferably Leu), and Yaa (Ala or Ser) and Zaa (Gly or Ala) have small, neutral side chains.. It functions in the pathway protein modification; lipoprotein biosynthesis (signal peptide cleavage). In terms of biological role, this protein specifically catalyzes the removal of signal peptides from prolipoproteins. The chain is Lipoprotein signal peptidase from Bartonella quintana (strain Toulouse) (Rochalimaea quintana).